Consider the following 125-residue polypeptide: MFEDKELEKHITPQTLKPKIKQNPLYSHINIIQTEENKSKPSWTIQDYDRHTSHGQLADYMKEDPRDLSFWLEDLYTPGYDSLLKKKAAEMKRNKICKTFAFITLFVCAVVIIITVPIVVKQSRD.

Asparagine 37 is a glycosylation site (N-linked (GlcNAc...) asparagine). A helical transmembrane segment spans residues 100-120 (FAFITLFVCAVVIIITVPIVV).

This sequence belongs to the MINAR family. In terms of assembly, interacts with NOTCH2. As to expression, highly expressed in the auditory hair cells.

It is found in the lysosome membrane. Its subcellular location is the endoplasmic reticulum membrane. Its function is as follows. Binds cholesterol and may regulate the distribution and homeostasis of cholesterol in hair cells. May play a role in angiogenesis. In Danio rerio (Zebrafish), this protein is Major intrinsically disordered NOTCH2-binding receptor 1-like.